A 532-amino-acid chain; its full sequence is KICSTOR complex protein ITFG2 (532 aa).

Residues 19 to 48 form an FG-GAP 1; atypical repeat; that stretch reads FPHAICLGDVDNDTLNELVVGDTSGKLSVY. Phosphoserine is present on S104. The FG-GAP 2; atypical repeat unit spans residues 126–155; the sequence is NTKVMLISDIDGDGRCELVVGYTDRVVRAF. The interval 248–271 is disordered; the sequence is PHPQQERLHSPHRQHQASHSPDSS.

As to quaternary structure, part of the KICSTOR complex composed of KPTN, ITFG2, KICS2 and SZT2. SZT2 probably serves as a link between the other three proteins in the KICSTOR complex and may mediate the direct interaction with the GATOR complex via GATOR1. The KICSTOR complex interacts directly with the GATOR1 complex and most probably indirectly with the GATOR2 complex in an amino acid-independent manner.

The protein localises to the lysosome membrane. Functionally, as part of the KICSTOR complex functions in the amino acid-sensing branch of the TORC1 signaling pathway. Recruits, in an amino acid-independent manner, the GATOR1 complex to the lysosomal membranes and allows its interaction with GATOR2 and the RAG GTPases. Functions upstream of the RAG GTPases and is required to negatively regulate mTORC1 signaling in absence of amino acids. In absence of the KICSTOR complex mTORC1 is constitutively localized to the lysosome and activated. The KICSTOR complex is also probably involved in the regulation of mTORC1 by glucose. In Bos taurus (Bovine), this protein is KICSTOR complex protein ITFG2.